A 448-amino-acid polypeptide reads, in one-letter code: Probable glycine dehydrogenase (decarboxylating) subunit 1 (448 aa).

This sequence belongs to the GcvP family. N-terminal subunit subfamily. In terms of assembly, the glycine cleavage system is composed of four proteins: P, T, L and H. In this organism, the P 'protein' is a heterodimer of two subunits.

The catalysed reaction is N(6)-[(R)-lipoyl]-L-lysyl-[glycine-cleavage complex H protein] + glycine + H(+) = N(6)-[(R)-S(8)-aminomethyldihydrolipoyl]-L-lysyl-[glycine-cleavage complex H protein] + CO2. Functionally, the glycine cleavage system catalyzes the degradation of glycine. The P protein binds the alpha-amino group of glycine through its pyridoxal phosphate cofactor; CO(2) is released and the remaining methylamine moiety is then transferred to the lipoamide cofactor of the H protein. The polypeptide is Probable glycine dehydrogenase (decarboxylating) subunit 1 (gcvPA) (Bacillus subtilis (strain 168)).